The chain runs to 177 residues: Disulfide bond formation protein B (177 aa).

Over 1 to 14 the chain is Cytoplasmic; it reads MLIFFKNLSMKRST. The chain crosses the membrane as a helical span at residues 15–31; it reads WILLFISALVLESTALY. At 32 to 49 the chain is on the periplasmic side; it reads FQHGMGLNPCVMCIYERV. A disulfide bridge connects residues Cys-41 and Cys-44. Residues 50–65 traverse the membrane as a helical segment; it reads AILGILFSGLIGCIAP. The Cytoplasmic segment spans residues 66-72; it reads KWLVLRI. A helical transmembrane segment spans residues 73–90; that stretch reads LALLIGLGSAVKGLLLAI. Topologically, residues 91 to 145 are periplasmic; it reads KHLDYQINVYPWNQCAMVPDFPQTLPLDKWFPNIFMPSGSCSDITWSFLGFSMVQ. Cys-105 and Cys-131 are oxidised to a cystine. Residues 146 to 164 traverse the membrane as a helical segment; sequence WIIVIFACYFLFFIILSIS. Topologically, residues 165 to 177 are cytoplasmic; sequence QFKKVRKNRMLFR.

It belongs to the DsbB family.

The protein resides in the cell inner membrane. Required for disulfide bond formation in some periplasmic proteins. Acts by oxidizing the DsbA protein. The chain is Disulfide bond formation protein B from Histophilus somni (strain 129Pt) (Haemophilus somnus).